Reading from the N-terminus, the 420-residue chain is Alpha-ketoglutarate-dependent xanthine dioxygenase xan-1 (420 aa).

Residues histidine 157 and aspartate 159 each contribute to the Fe cation site. 2-oxoglutarate contacts are provided by threonine 206 and tryptophan 336. Residue histidine 351 coordinates Fe cation. Position 366 (arginine 366) interacts with 2-oxoglutarate. Substrate is bound at residue arginine 366.

Belongs to the TfdA dioxygenase family. The cofactor is Fe(2+).

It is found in the cytoplasm. The protein localises to the cytosol. It carries out the reaction xanthine + 2-oxoglutarate + O2 = urate + succinate + CO2. Its function is as follows. Alpha-ketoglutarate-dependent xanthine dioxygenase is a non-heme mononuclear Fe(2+) enzyme that decarboxylates alpha-ketoglutarate to succinate and CO(2) while hydroxylating xanthine to generate uric acid. Allows xanthine utilization as a nitrogen source. The chain is Alpha-ketoglutarate-dependent xanthine dioxygenase xan-1 from Neurospora crassa (strain ATCC 24698 / 74-OR23-1A / CBS 708.71 / DSM 1257 / FGSC 987).